Consider the following 338-residue polypeptide: Inositol 2-dehydrogenase (338 aa).

It belongs to the Gfo/Idh/MocA family. Homotetramer.

The enzyme catalyses myo-inositol + NAD(+) = scyllo-inosose + NADH + H(+). Its function is as follows. Involved in the oxidation of myo-inositol (MI) to 2-keto-myo-inositol (2KMI or 2-inosose). In Azotobacter vinelandii (strain DJ / ATCC BAA-1303), this protein is Inositol 2-dehydrogenase.